Reading from the N-terminus, the 881-residue chain is Phosphoinositide 3-kinase regulatory subunit 5 (881 aa).

Residues 23 to 99 form a heterodimerization region; it reads SRDAVSSRWA…APHIPPDSEL (77 aa). Disordered stretches follow at residues 312–339 and 472–499; these read PVAS…ERDS and PQAK…KLQT. A compositionally biased stretch (acidic residues) spans 316 to 330; that stretch reads ENEEDEEEEEEDVET. The interaction with G beta gamma proteins stretch occupies residues 657 to 757; the sequence is PILADMILYY…WNDVEKVCTS (101 aa).

In terms of assembly, heterodimer. Interacts with a catalytic subunit and with G beta gamma proteins.

Its subcellular location is the nucleus. It localises to the cytoplasm. The protein localises to the cell membrane. With respect to regulation, greatly activated by G gamma proteins. In terms of biological role, regulatory subunit of the PI3K gamma complex. This chain is Phosphoinositide 3-kinase regulatory subunit 5 (PIK3R5), found in Gallus gallus (Chicken).